Reading from the N-terminus, the 158-residue chain is MFDILMYLFENFIHSETEIRVDQDELTDELVRAGFHQDEIYKALSWLEKLAALQETDINPYLVKGPTSFVTRIYTHEEEMRLDIECRGFLMFLEQINVLDSTTREMVIDRVMEIDSKEFCLEDMKWVVLMVLFNVPGKENAYAQMEDLLFEEPEGPLH.

Belongs to the Smg family.

The polypeptide is Protein Smg homolog (Pseudoalteromonas atlantica (strain T6c / ATCC BAA-1087)).